Consider the following 181-residue polypeptide: Interleukin-10 (181 aa).

Positions 1-19 are cleaved as a signal peptide; sequence MHGSALLCCCLVLLAGVGA. Cystine bridges form between Cys31–Cys129 and Cys81–Cys135. An N-linked (GlcNAc...) asparagine glycan is attached at Asn137.

It belongs to the IL-10 family. As to quaternary structure, homodimer. Interacts with IL10RA and IL10RB.

Its subcellular location is the secreted. Its function is as follows. Major immune regulatory cytokine that acts on many cells of the immune system where it has profound anti-inflammatory functions, limiting excessive tissue disruption caused by inflammation. Mechanistically, IL10 binds to its heterotetrameric receptor comprising IL10RA and IL10RB leading to JAK1 and STAT2-mediated phosphorylation of STAT3. In turn, STAT3 translocates to the nucleus where it drives expression of anti-inflammatory mediators. Targets antigen-presenting cells (APCs) such as macrophages and monocytes and inhibits their release of pro-inflammatory cytokines including granulocyte-macrophage colony-stimulating factor /GM-CSF, granulocyte colony-stimulating factor/G-CSF, IL-1 alpha, IL-1 beta, IL-6, IL-8 and TNF-alpha. Also interferes with antigen presentation by reducing the expression of MHC-class II and co-stimulatory molecules, thereby inhibiting their ability to induce T cell activation. In addition, controls the inflammatory response of macrophages by reprogramming essential metabolic pathways including mTOR signaling. This is Interleukin-10 (IL10) from Canis lupus familiaris (Dog).